A 599-amino-acid chain; its full sequence is Glutamine--fructose-6-phosphate aminotransferase [isomerizing] (599 aa).

The Nucleophile; for GATase activity role is filled by C2. Positions 2-223 (CGIIGYIGNE…DRDIVILRKE (222 aa)) constitute a Glutamine amidotransferase type-2 domain. 2 consecutive SIS domains span residues 286–423 (LGKE…IIGK) and 452–589 (IAEE…VDKP). The active-site For Fru-6P isomerization activity is K594.

As to quaternary structure, homodimer.

It is found in the cytoplasm. It carries out the reaction D-fructose 6-phosphate + L-glutamine = D-glucosamine 6-phosphate + L-glutamate. In terms of biological role, catalyzes the first step in hexosamine metabolism, converting fructose-6P into glucosamine-6P using glutamine as a nitrogen source. The chain is Glutamine--fructose-6-phosphate aminotransferase [isomerizing] (glmS) from Methanococcus maripaludis (strain DSM 14266 / JCM 13030 / NBRC 101832 / S2 / LL).